Here is a 98-residue protein sequence, read N- to C-terminus: Large ribosomal subunit protein uL23 (98 aa).

Belongs to the universal ribosomal protein uL23 family. Part of the 50S ribosomal subunit. Contacts protein L29, and trigger factor when it is bound to the ribosome.

One of the early assembly proteins it binds 23S rRNA. One of the proteins that surrounds the polypeptide exit tunnel on the outside of the ribosome. Forms the main docking site for trigger factor binding to the ribosome. In Maricaulis maris (strain MCS10) (Caulobacter maris), this protein is Large ribosomal subunit protein uL23.